Here is a 374-residue protein sequence, read N- to C-terminus: Proteinase-activated receptor 3 (374 aa).

The first 21 residues, 1–21, serve as a signal peptide directing secretion; it reads MKALIFAAAGLLLLLPTFCQS. A propeptide spans 22-38 (removed for receptor activation); it reads GMENDTNNLAKPTLPIK. N-linked (GlcNAc...) asparagine glycosylation is found at N25 and N82. Over 39 to 94 the chain is Extracellular; the sequence is TFRGAPPNSFEEFPFSALEGWTGATITVKIKCPEESASHLHVKNATMGYLTSSLST. Residues 95–120 traverse the membrane as a helical segment; the sequence is KLIPAIYLLVFVVGVPANAVTLWMLF. The Cytoplasmic portion of the chain corresponds to 121–128; the sequence is FRTRSICT. Residues 129–148 traverse the membrane as a helical segment; it reads TVFYTNLAIADFLFCVTLPF. Residues 149–167 are Extracellular-facing; it reads KIAYHLNGNNWVFGEVLCR. Cysteines 166 and 245 form a disulfide. The helical transmembrane segment at 168–189 threads the bilayer; sequence ATTVIFYGNMYCSILLLACISI. The Cytoplasmic segment spans residues 190-206; the sequence is NRYLAIVHPFTYRGLPK. A helical membrane pass occupies residues 207–230; sequence HTYALVTCGLVWATVFLYMLPFFI. Topologically, residues 231 to 260 are extracellular; it reads LKQEYYLVQPDITTCHDVHNTCESSSPFQL. Residues 261–280 traverse the membrane as a helical segment; that stretch reads YYFISLAFFGFLIPFVLIIY. Residues 281 to 297 are Cytoplasmic-facing; it reads CYAAIIRTLNAYDHRWL. The chain crosses the membrane as a helical span at residues 298 to 322; sequence WYVKASLLILVIFTICFAPSNIILI. Topologically, residues 323 to 336 are extracellular; the sequence is IHHANYYYNNTDGL. N-linked (GlcNAc...) asparagine glycosylation occurs at N331. A helical membrane pass occupies residues 337–361; the sequence is YFIYLIALCLGSLNSCLDPFLYFLM. Topologically, residues 362-374 are cytoplasmic; the sequence is SKTRNHSTAYLTK.

It belongs to the G-protein coupled receptor 1 family. In terms of assembly, interacts with INSC/inscuteable and probably GPSM2. A proteolytic cleavage generates a new N-terminus that functions as a tethered ligand. As to expression, highest expression in the megakaryocytes of the bone marrow, lower in mature megakaryocytes, in platelets and in a variety of other tissues such as heart and gut.

It is found in the cell membrane. Its function is as follows. Receptor for activated thrombin coupled to G proteins that stimulate phosphoinositide hydrolysis. This chain is Proteinase-activated receptor 3 (F2RL2), found in Homo sapiens (Human).